The sequence spans 205 residues: Protein N-terminal glutamine amidohydrolase (205 aa).

Residues cysteine 20, histidine 74, and aspartate 90 contribute to the active site.

Belongs to the NTAQ1 family. In terms of assembly, monomer.

The enzyme catalyses N-terminal L-glutaminyl-[protein] + H2O = N-terminal L-glutamyl-[protein] + NH4(+). Functionally, mediates the side-chain deamidation of N-terminal glutamine residues to glutamate, an important step in N-end rule pathway of protein degradation. Conversion of the resulting N-terminal glutamine to glutamate renders the protein susceptible to arginylation, polyubiquitination and degradation as specified by the N-end rule. Does not act on substrates with internal or C-terminal glutamine and does not act on non-glutamine residues in any position. This chain is Protein N-terminal glutamine amidohydrolase (tun), found in Drosophila mojavensis (Fruit fly).